Consider the following 547-residue polypeptide: Inositol 1,4,5-trisphosphate receptor-interacting protein (547 aa).

Positions 1 to 15 (MAMGLFRVCLVVVTA) are cleaved as a signal peptide. Topologically, residues 16–83 (IINHPLLFPR…EEGRQQNETR (68 aa)) are extracellular. N-linked (GlcNAc...) asparagine glycans are attached at residues asparagine 27 and asparagine 80. A coiled-coil region spans residues 32-82 (ENEEEIIRKMQAHQEKLQLEQLRLEEEVARLAAEKEALEQVAEEGRQQNET). A helical membrane pass occupies residues 84–100 (VAWDLWSTLCMILFLMI). Over 101–547 (EVWRQDHQEG…VPSDQPTPKS (447 aa)) the chain is Cytoplasmic. Residues 109–129 (EGPSPECLGGEEDELPGLGGA) form a disordered region. Serine 547 bears the Phosphoserine mark.

It belongs to the ITPRIP family. Interacts with ITPR. Detected in brain where it is concentrated in cerebellar Purkinje cells (at protein level).

It localises to the cell membrane. It is found in the nucleus outer membrane. In terms of biological role, enhances Ca(2+)-mediated inhibition of inositol 1,4,5-triphosphate receptor (ITPR) Ca(2+) release. This Homo sapiens (Human) protein is Inositol 1,4,5-trisphosphate receptor-interacting protein (ITPRIP).